The sequence spans 568 residues: Proton-coupled zinc antiporter SLC30A9, mitochondrial (568 aa).

The transit peptide at 1–67 (MLPGLAAAAA…IGTLSQVKLY (67 aa)) directs the protein to the mitochondrion. 5 helical membrane passes run 239–259 (VVMV…LAWI), 314–334 (GVGI…MGLL), 342–362 (LLWA…TLLV), 392–412 (VILL…TCMG), and 424–444 (SLGS…LIYT). The short motif at 462-466 (LTELL) is the LXXLL motif element.

This sequence belongs to the cation diffusion facilitator (CDF) transporter (TC 2.A.4) family. SLC30A subfamily. In terms of assembly, interacts with GRIP1, ESR1 and AR. Ubiquitously expressed in fetal and adult tissues and cancer cell lines.

The protein resides in the mitochondrion membrane. It is found in the nucleus. Its subcellular location is the endoplasmic reticulum. The enzyme catalyses Zn(2+)(in) + 2 H(+)(out) = Zn(2+)(out) + 2 H(+)(in). Functionally, mitochondrial proton-coupled zinc ion antiporter mediating the export of zinc from the mitochondria and involved in zinc homeostasis, zinc mobilization as well as mitochondrial morphology and health. In nucleus, functions as a secondary coactivator for nuclear receptors by cooperating with p160 coactivators subtypes. Plays a role in transcriptional activation of Wnt-responsive genes. The polypeptide is Proton-coupled zinc antiporter SLC30A9, mitochondrial (Homo sapiens (Human)).